Consider the following 1025-residue polypeptide: Leucyl-cystinyl aminopeptidase (1025 aa).

N-acetylmethionine is present on methionine 1. Residues 1 to 109 (MESFTNDRLQ…DGTCSLPSAR (109 aa)) lie on the Cytoplasmic side of the membrane. The short motif at 53 to 54 (LL) is the Dileucine internalization motif element. Position 70 is a phosphotyrosine (tyrosine 70). Residues 76 to 77 (LL) carry the Dileucine internalization motif motif. Phosphoserine is present on residues serine 80 and serine 91. The interval 96 to 101 (RQSPDG) is tankyrase binding. Residues 110–131 (TLVICVFVIVVAVSVIMVIYLL) traverse the membrane as a helical; Signal-anchor for type II membrane protein segment. Topologically, residues 132-1025 (PRCTFTKEGC…RNLKTLSQWL (894 aa)) are extracellular. Residues asparagine 145, asparagine 184, asparagine 215, asparagine 256, and asparagine 266 are each glycosylated (N-linked (GlcNAc...) asparagine). Glutamate 295 contributes to the substrate binding site. Asparagine 368 and asparagine 374 each carry an N-linked (GlcNAc...) asparagine glycan. 428–432 (GAMEN) provides a ligand contact to substrate. Asparagine 447 carries N-linked (GlcNAc...) asparagine glycosylation. Histidine 464 provides a ligand contact to Zn(2+). The active-site Proton acceptor is glutamate 465. Zn(2+) contacts are provided by histidine 468 and glutamate 487. Residues asparagine 525, asparagine 578, asparagine 664, asparagine 682, asparagine 695, asparagine 758, asparagine 834, asparagine 850, and asparagine 989 are each glycosylated (N-linked (GlcNAc...) asparagine).

The protein belongs to the peptidase M1 family. In terms of assembly, homodimer. Binds tankyrases 1 and 2. Zn(2+) is required as a cofactor.

The protein localises to the cell membrane. It is found in the endomembrane system. It carries out the reaction Release of an N-terminal amino acid, Cys-|-Xaa-, in which the half-cystine residue is involved in a disulfide loop, notably in oxytocin or vasopressin. Hydrolysis rates on a range of aminoacyl arylamides exceed that for the cystinyl derivative, however.. Functionally, release of an N-terminal amino acid, cleave before cysteine, leucine as well as other amino acids. Degrades peptide hormones such as oxytocin, vasopressin and angiotensin III, and plays a role in maintaining homeostasis during pregnancy. May be involved in the inactivation of neuronal peptides in the brain. Cleaves Met-enkephalin and dynorphin. Binds angiotensin IV and may be the angiotensin IV receptor in the brain. This chain is Leucyl-cystinyl aminopeptidase (Lnpep), found in Mus musculus (Mouse).